Reading from the N-terminus, the 290-residue chain is UPF0761 membrane protein YihY (290 aa).

6 consecutive transmembrane segments (helical) span residues 44 to 64, 104 to 124, 140 to 160, 183 to 203, 210 to 230, and 244 to 264; these read LLSL…FPMF, VGAC…DSAL, FAVY…SLAI, VLPL…VPTT, AIVG…GFAL, and VLAV…IVLL.

This sequence belongs to the UPF0761 family.

The protein localises to the cell inner membrane. In Salmonella arizonae (strain ATCC BAA-731 / CDC346-86 / RSK2980), this protein is UPF0761 membrane protein YihY.